A 489-amino-acid polypeptide reads, in one-letter code: Rhamnulokinase (489 aa).

Position 13 to 17 (Ala13 to Arg17) interacts with ATP. Residues Cys68 and Cys222 are joined by a disulfide bond. Substrate-binding positions include Gly83 and His236 to Thr238. Asp237 acts as the Proton acceptor in catalysis. Residue Thr259 coordinates ATP. Position 296 (Asn296) interacts with substrate. Residue Gln304 coordinates ATP. Residues Cys353 and Cys370 are joined by a disulfide bond. Position 402 (Gly402) interacts with ATP. A disulfide bridge connects residues Cys413 and Cys417.

The protein belongs to the rhamnulokinase family. Mg(2+) is required as a cofactor.

It catalyses the reaction L-rhamnulose + ATP = L-rhamnulose 1-phosphate + ADP + H(+). Its pathway is carbohydrate degradation; L-rhamnose degradation; glycerone phosphate from L-rhamnose: step 2/3. In terms of biological role, involved in the catabolism of L-rhamnose (6-deoxy-L-mannose). Catalyzes the transfer of the gamma-phosphate group from ATP to the 1-hydroxyl group of L-rhamnulose to yield L-rhamnulose 1-phosphate. This Salmonella typhimurium (strain LT2 / SGSC1412 / ATCC 700720) protein is Rhamnulokinase.